Consider the following 325-residue polypeptide: Protease HtpX homolog (325 aa).

The chain crosses the membrane as a helical span at residues 20 to 40; sequence IGYLLGGGGGMMIALVIAVAM. Residue histidine 130 coordinates Zn(2+). Glutamate 131 is an active-site residue. Residue histidine 134 participates in Zn(2+) binding. A run of 2 helical transmembrane segments spans residues 145-165 and 173-193; these read IVATLAGAISMLGNFAFFLGG and VMGVVGTLLAMIVAPFGAMIV. Glutamate 202 contacts Zn(2+). The tract at residues 286–325 is disordered; that stretch reads SAAMTARAAAPSQNSGPWGQRSDNAGGNSNGGSRYRGPWS. The segment covering 306–325 has biased composition (low complexity); it reads RSDNAGGNSNGGSRYRGPWS.

The protein belongs to the peptidase M48B family. Zn(2+) serves as cofactor.

It is found in the cell inner membrane. This is Protease HtpX homolog from Brucella melitensis biotype 2 (strain ATCC 23457).